Here is a 141-residue protein sequence, read N- to C-terminus: Acetyltransferase YE1169 (141 aa).

In terms of domain architecture, N-acetyltransferase spans 1-141 (MEIRVFQQSD…GKRLIVDQEY (141 aa)).

Belongs to the acetyltransferase family. YpeA subfamily.

The chain is Acetyltransferase YE1169 from Yersinia enterocolitica serotype O:8 / biotype 1B (strain NCTC 13174 / 8081).